The sequence spans 820 residues: Sodium/hydrogen exchanger 1 (820 aa).

Over 1–102 (MMLRWSGIWG…FPVLDIDYLH (102 aa)) the chain is Extracellular. A disordered region spans residues 44–71 (ASTIRGSEPPRERSIGDVTTAPSEPLHH). Residues 103–125 (VRTPFEISLWILLACLMKIGFHV) traverse the membrane as a helical segment. Residues 126–134 (IPTISSIVP) are Cytoplasmic-facing. A helical transmembrane segment spans residues 135–152 (ESCLLIVVGLLVGGLIKG). Residues 153-162 (VGETPPFLQS) are Extracellular-facing. Residues 163-180 (DVFFLFLLPPIILDAGYF) traverse the membrane as a helical segment. The Cytoplasmic segment spans residues 181 to 190 (LPLRQFTENL). A helical membrane pass occupies residues 191–219 (GTILIFAVVGTLWNAFFLGGLLYAVCLVG). At 220-226 (GEQINNI) the chain is on the extracellular side. Residues 227–253 (GLLDTLLFGSIISAVDPVAVLAVFEEI) traverse the membrane as a helical segment. The Cytoplasmic portion of the chain corresponds to 254–256 (HIN). The chain crosses the membrane as a helical span at residues 257–287 (ELLHILVFGESLLNDAVTVVLYHLFEEFASY). Over 288 to 291 (EYVG) the chain is Extracellular. Residues 292 to 326 (ISDIFLGFLSFFVVSLGGVFVGVVYGVIAAFTSRF) traverse the membrane as a helical segment. Over 327–332 (TSHIRV) the chain is Cytoplasmic. Residues 333–345 (IEPLFVFLYSYMA) form a helical membrane-spanning segment. At 346 to 354 (YLSAELFHL) the chain is on the extracellular side. Residues 355–375 (SGIMALIASGVVMRPYVEANI) form a helical membrane-spanning segment. Topologically, residues 376-377 (SH) are cytoplasmic. A helical transmembrane segment spans residues 378-408 (KSHTTIKYFLKMWSSVSETLIFIFLGVSTVA). The Extracellular portion of the chain corresponds to 409–414 (GSHQWN). A helical membrane pass occupies residues 415–442 (WTFVISTLLFCLIARVLGVLVLTWFINK). The Cytoplasmic portion of the chain corresponds to 443 to 448 (FRIVKL). The helical transmembrane segment at 449–473 (TPKDQFIIAYGGLRGAIAFSLGYLL) threads the bilayer. At 474-479 (DKKHFP) the chain is on the extracellular side. A helical membrane pass occupies residues 480–509 (MCDLFLTAIITVIFFTVFVQGMTIRPLVDL). The tract at residues 505–571 (PLVDLLAVKK…VKKCLIAGER (67 aa)) is interaction with TESC. Topologically, residues 510–820 (LAVKKKQETK…EGEPFIPKGQ (311 aa)) are cytoplasmic. Residues 513-520 (KKKQETKR) are PI(4,5)P2-binding region. Residues 519 to 549 (KRSINEEIHTQFLDHLLTGIEDICGHYGHHH) form an interaction with CHP2 region. Residues 544 to 549 (HYGHHH) are confers pH-dependent PI(4,5)P2 binding. Positions 556–564 (RFNKKYVKK) are PI(4,5)P2-binding region. A phosphoserine mark is found at serine 603 and serine 606. Threonine 607 bears the Phosphothreonine mark. Phosphoserine is present on residues serine 609 and serine 652. Positions 637–820 (KILRSNLQKT…EGEPFIPKGQ (184 aa)) are interaction with TESC. The segment at 637–820 (KILRSNLQKT…EGEPFIPKGQ (184 aa)) is interaction with CALM1. Residues 688–691 (LTVP) are interaction with PPP3CA. Residues serine 697, serine 701, and serine 707 each carry the phosphoserine modification. The interval 719 to 724 (PVITID) is interaction with PPP3CA. Phosphoserine occurs at positions 727, 730, and 733. Residues 747–820 (GLKRGPRTTP…EGEPFIPKGQ (74 aa)) are disordered. Threonine 755 and threonine 784 each carry phosphothreonine. A phosphoserine mark is found at serine 790 and serine 801.

Belongs to the monovalent cation:proton antiporter 1 (CPA1) transporter (TC 2.A.36) family. In terms of assembly, homodimer; dimerization is crucial for its function. Oligomer. Interacts with CALM1 in a calcium-dependent manner. Interacts with TESC. Interacts (via residues 504-563) with CHP1. The interaction with CHP1 occurs at the plasma membrane in a calcium-dependent manner. Interacts with CHP2. The interaction with CHP2 occurs in a calcium-dependent manner. Interacts with EZR; regulates the cytoskeletal interactions of SLC9A1 and promotes stress fiber formation. N-glycosylated and O-glycosylated in the N-terminal region. Post-translationally, ubiquitinated, leading to its degradation by the proteasome. Ubiquitination is reduced by CHP1. In terms of processing, palmitoylated; may play a major role in SLC9A1 regulation. Phosphorylation at Thr-784 increases SLC9A1 activity; specifically dephosphorylated by PPP3CA. Specifically dephosphorylated at Thr-784 by PPP3CA that negatively regulates SLC9A1 activity. Phosphorylation at Ser-652 by AKT1 reduces SLC9A1 binding to CALM1. As to expression, widely expressed.

The protein resides in the cell membrane. Its subcellular location is the basolateral cell membrane. The enzyme catalyses Na(+)(in) + H(+)(out) = Na(+)(out) + H(+)(in). The catalysed reaction is Li(+)(out) + H(+)(in) = Li(+)(in) + H(+)(out). It catalyses the reaction Li(+)(in) + Na(+)(out) = Li(+)(out) + Na(+)(in). Activated at acidic pHs. Inhibited by cariporide and eniporide. Inhibited by amiloride and 5-amino-substituted derivatives. Phosphatidylinositol 4,5-bisphosphate (PI(4,5)P2) bind and activates SLC9A1 transporter activity. Functionally, electroneutral Na(+) /H(+) antiporter that extrudes Na(+) in exchange for external protons driven by the inward sodium ion chemical gradient, protecting cells from acidification that occurs from metabolism. Exchanges intracellular H(+) ions for extracellular Na(+) in 1:1 stoichiometry. Plays a key role in maintening intracellular pH neutral and cell volume, and thus is important for cell growth, proliferation, migration and survival. In addition, can transport lithium Li(+) and also functions as a Na(+)/Li(+) antiporter. SLC9A1 also functions in membrane anchoring and organization of scaffolding complexes that coordinate signaling inputs. The polypeptide is Sodium/hydrogen exchanger 1 (Slc9a1) (Rattus norvegicus (Rat)).